Reading from the N-terminus, the 90-residue chain is MKVSVLITLAVLGVMFVWTSAAEQEDHGSDRRDSPALLKSLGRVFQSEERACRELLGGCSKDSDCCAHLECRKKWPYHCVWDWTFGNEKS.

Residues 1 to 22 (MKVSVLITLAVLGVMFVWTSAA) form the signal peptide. The propeptide occupies 23–50 (EQEDHGSDRRDSPALLKSLGRVFQSEER). 3 disulfide bridges follow: C52/C66, C59/C71, and C65/C79. F85 bears the Phenylalanine amide mark. The propeptide occupies 86-90 (GNEKS).

It belongs to the neurotoxin 10 (Hwtx-1) family. 39 (Jztx-34) subfamily. In terms of tissue distribution, expressed by the venom gland.

The protein resides in the secreted. Its function is as follows. Gating-modifier toxin that inhibits voltage-gated sodium channel Nav by shifting the threshold for channel activation to more positive potentials. This toxin moderately inhibits human Nav1.7/SCN9A (IC(50)=360 nM) and weakly inhibits hNav1.2/SCN2A (37% inhibition at 1 uM peptide) and hNav1.5/SCN5A (&lt;20% inhibition at 1 uM peptide). Inhibition of Nav1.7 is voltage-dependent, with lower inhibition at more positive test pulses. In Phlogius sp. (Tarantula spider), this protein is Mu-theraphotoxin-Phlo1b.